The following is a 661-amino-acid chain: MNVILVLVVLFFAGDCAKIRKIIDFLEKDAPNDIEKTPNYNEESLAVKRNKNFNPCLENPKICSNRGKCLHENGNFYCICPVTHYGKTCEHVSDQTNCEKHLCQNNSTCVSIKSLRTIVNTVLLRQIRVQRKVNGSKAALTNEELAEIDLEVNYECICQKGYFGGLCDESEADRTCQEVYCLGRGKGAINATGKCECECENQFFGDRCEQISACFDTQCDNGGICEDVVDWKTKTVTATCKCPSAIELIGGTVTGENCETLQIPSTAPKEFIPCAEGSNSTMFFKKFIANISLEYMDDISELEAIKNDYNDGKNVNGTMTDGWCRNDGKCVPEVVRVNSSRAYYIYRCECTNPLTDGYYCEYKRHDSCSLTREEVARGDRWDEKCTDSQHGACVDISGVAHCVCKPDYTGEKCEIFDPCARQPCKHGDCIPIPNTADVAFGTSRYQCLCPLSAKLNPESQACMEINEKKCAPGACGNGRCVPCESDADDLMPLCNDNDNRQGFRCLCEAGYLPPFCKVHTNPCYQNLCQNSATCHIDPKQRSYDCQCVNGTRGSLCENVDDSCDAFGNKICVHGTCINDEYFHRGFSCECDDGFEGLDCNVEIAWSSVMTNRLMKNYEFSLPLVACFVSLAILLPVIVISRRRQGRVEEAKKTSEVKTENP.

Residues 1–16 (MNVILVLVVLFFAGDC) form the signal peptide. Over 17–618 (AKIRKIIDFL…MTNRLMKNYE (602 aa)) the chain is Extracellular. An EGF-like 1 domain is found at 52–90 (NFNPCLENPKICSNRGKCLHENGNFYCICPVTHYGKTCE). Intrachain disulfides connect C56-C69, C63-C78, and C80-C89. N105, N106, N134, and N190 each carry an N-linked (GlcNAc...) asparagine glycan. Residues 210–259 (QISACFDTQCDNGGICEDVVDWKTKTVTATCKCPSAIELIGGTVTGENCE) enclose the EGF-like 2 domain. 3 cysteine pairs are disulfide-bonded: C214–C225, C219–C240, and C242–C258. N279, N290, N316, and N338 each carry an N-linked (GlcNAc...) asparagine glycan. The Cell attachment site signature appears at 377-379 (RGD). EGF-like domains follow at residues 377-414 (RGDRWDEKCTDSQHGACVDISGVAHCVCKPDYTGEKCE), 519-557 (HTNPCYQNLCQNSATCHIDPKQRSYDCQCVNGTRGSLCE), and 559-600 (VDDS…LDCN). 9 cysteine pairs are disulfide-bonded: C385–C402, C393–C404, C413–C419, C523–C534, C528–C545, C547–C556, C563–C576, C571–C588, and C590–C599. N-linked (GlcNAc...) asparagine glycosylation occurs at N549. Residues 619-639 (FSLPLVACFVSLAILLPVIVI) form a helical membrane-spanning segment. Residues 640–661 (SRRRQGRVEEAKKTSEVKTENP) lie on the Cytoplasmic side of the membrane.

As to expression, expressed in spermatids, during spermogenesis expression is primarily localized to the pseudopod.

It is found in the cytoplasm. Its subcellular location is the membrane. Its function is as follows. Required for fertilization. May be required for cell adhesion and/or function as a signaling molecule. In Caenorhabditis elegans, this protein is Sperm transmembrane protein 9 (spe-9).